The chain runs to 398 residues: Ornithine aminotransferase (398 aa).

K256 carries the N6-(pyridoxal phosphate)lysine modification.

Belongs to the class-III pyridoxal-phosphate-dependent aminotransferase family. OAT subfamily. Pyridoxal 5'-phosphate serves as cofactor.

The protein localises to the cytoplasm. The catalysed reaction is a 2-oxocarboxylate + L-ornithine = L-glutamate 5-semialdehyde + an L-alpha-amino acid. It participates in amino-acid biosynthesis; L-proline biosynthesis; L-glutamate 5-semialdehyde from L-ornithine: step 1/1. Functionally, catalyzes the interconversion of ornithine to glutamate semialdehyde. The chain is Ornithine aminotransferase from Halalkalibacterium halodurans (strain ATCC BAA-125 / DSM 18197 / FERM 7344 / JCM 9153 / C-125) (Bacillus halodurans).